Reading from the N-terminus, the 102-residue chain is Nuclear protein 2 (102 aa).

Disordered regions lie at residues 1–26 (MDPPTRPSVSGPRTRARPPPPEALPT) and 46–102 (PASG…TRLA). The segment covering 85-102 (QRKRRQRQLQPRPRTRLA) has biased composition (basic residues).

The protein belongs to the NUPR family.

It localises to the nucleus. Functionally, acts as a transcriptional repressor by inhibiting gene expression at the NUPR1 promoter in a p53/TP53-dependent manner in cancer cells. Involved in the G1 cell cycle arrest, and in a decrease in cell viability and cell proliferation of pancreatic cancer cells. Plays a role as a negative regulator of the protumoral factor NUPR1. The sequence is that of Nuclear protein 2 from Mus musculus (Mouse).